A 29-amino-acid polypeptide reads, in one-letter code: Cycloviolacin-O16 (29 aa).

The segment at residues 1-29 is a cross-link (cyclopeptide (Gly-Asn)); the sequence is GLPCGETCFTGKCYTPGCSCSYPICKKIN. 3 disulfide bridges follow: Cys-4-Cys-18, Cys-8-Cys-20, and Cys-13-Cys-25.

In terms of processing, this is a cyclic peptide.

Its function is as follows. Probably participates in a plant defense mechanism. The chain is Cycloviolacin-O16 from Viola odorata (Sweet violet).